A 226-amino-acid chain; its full sequence is PKHD-type hydroxylase PFL_0865 (226 aa).

The Fe2OG dioxygenase domain occupies 78 to 178 (KVFPPLINCY…RYASFFWTQS (101 aa)). Fe cation-binding residues include H96, D98, and H159. Residue R169 participates in 2-oxoglutarate binding.

It depends on Fe(2+) as a cofactor. The cofactor is L-ascorbate.

In Pseudomonas fluorescens (strain ATCC BAA-477 / NRRL B-23932 / Pf-5), this protein is PKHD-type hydroxylase PFL_0865.